Here is a 151-residue protein sequence, read N- to C-terminus: Late embryogenesis abundant protein Lea14-A (151 aa).

Belongs to the LEA type 2 family.

In Gossypium hirsutum (Upland cotton), this protein is Late embryogenesis abundant protein Lea14-A (LEA14-A).